Reading from the N-terminus, the 2250-residue chain is RNA1 polyprotein (2250 aa).

Over residues 346–371 (SPTVTPSSTPSTSRSSSPEPRVSSPS) the composition is skewed to low complexity. Residues 346–372 (SPTVTPSSTPSTSRSSSPEPRVSSPSG) are disordered. Positions 849-1020 (LRDAHNALSR…PHFHEFNLLA (172 aa)) constitute an SF3 helicase domain. The chain crosses the membrane as a helical span at residues 1225–1245 (VALCAVLLVGYLIIKFAIFLF). Serine 1299 carries the post-translational modification O-(5'-phospho-RNA)-serine. The Peptidase C3 domain occupies 1319-1532 (GPEEEPSQSL…YAQIVTLDDF (214 aa)). Residues histidine 1362, aspartate 1400, and cysteine 1495 each act as for picornain 3C-like protease activity in the active site. The region spanning 1814–1956 (TNWFNGDYSR…SVNDVITEKF (143 aa)) is the RdRp catalytic domain.

This sequence belongs to the comoviridae genome polyprotein B family. Specific enzymatic cleavages by picornain 3C-like protease in vivo yield mature proteins. Picornain 3C-like protease is autocatalytically processed. In terms of processing, viral genome-linked protein (VPg) is uridylylated by the polymerase and is covalently linked to the 5'-end of genomic RNA. This uridylylated form acts as a nucleotide-peptide primer for the polymerase.

The protein resides in the host membrane. It carries out the reaction RNA(n) + a ribonucleoside 5'-triphosphate = RNA(n+1) + diphosphate. Picornain 3C-like protease is a thiol protease that probably cleaves the B and M polyproteins. Its function is as follows. Viral genome-linked protein (VPg) plays a role in RNA replication. The chain is RNA1 polyprotein from Balsamorhiza sagittata (Apple).